Consider the following 355-residue polypeptide: rRNA biogenesis protein RRP36 (355 aa).

4 disordered regions span residues methionine 1–valine 178, valine 193–alanine 217, isoleucine 263–alanine 284, and tyrosine 319–glycine 355. Residues serine 36 to aspartate 72 show a composition bias toward acidic residues. The stretch at glutamate 111–arginine 150 forms a coiled coil. A compositionally biased stretch (basic and acidic residues) spans serine 123–serine 164. The span at alanine 203–alanine 217 shows a compositional bias: polar residues. Residues asparagine 233–lysine 325 adopt a coiled-coil conformation. Basic and acidic residues-rich tracts occupy residues arginine 271 to valine 282, tyrosine 319 to isoleucine 331, and alanine 339 to glycine 355.

The protein belongs to the RRP36 family. Associates with 90S and pre-40S pre-ribosomal particles.

Its subcellular location is the nucleus. The protein localises to the nucleolus. Functionally, component of the 90S pre-ribosome involved in the maturation of rRNAs. Required for early cleavages of the pre-RNAs in the 40S ribosomal subunit maturation pathway. This is rRNA biogenesis protein RRP36 (RRP36) from Trichophyton verrucosum (strain HKI 0517).